A 590-amino-acid chain; its full sequence is Muscarinic acetylcholine receptor M3 (590 aa).

Topologically, residues 1 to 67 are extracellular; that stretch reads MTLHSNSTTS…DPLGGHTVWQ (67 aa). N-linked (GlcNAc...) asparagine glycosylation is found at Asn-6, Asn-15, Asn-41, and Asn-48. The chain crosses the membrane as a helical span at residues 68 to 91; the sequence is VVFIAFLTGILALVTIIGNILVIV. The Cytoplasmic segment spans residues 92–104; sequence SFKVNKQLKTVNN. A helical membrane pass occupies residues 105–130; it reads YFLLSLACADLIIGVISMNLFTTYII. Residues 131–142 lie on the Extracellular side of the membrane; it reads MNRWALGNLACD. A disulfide bond links Cys-141 and Cys-221. The helical transmembrane segment at 143–164 threads the bilayer; sequence LWLAIDYVASNASVMNLLVISF. Residues 165 to 184 are Cytoplasmic-facing; that stretch reads DRYFSITRPLTYRAKRTTKR. A helical membrane pass occupies residues 185 to 206; the sequence is AGVMIGLAWVISFVLWAPAILF. Topologically, residues 207 to 229 are extracellular; the sequence is WQYFVGKRTVPPGECFIQFLSEP. The helical transmembrane segment at 230-252 threads the bilayer; that stretch reads TITFGTAIAAFYMPVTIMTILYW. Over 253–491 the chain is Cytoplasmic; that stretch reads RIYKETEKRT…SLVKEKKAAQ (239 aa). The Basolateral sorting signal signature appears at 275 to 281; it reads AETENFV. Residues 323-357 form a disordered region; sequence SSEQMDQDHSSSDSWNNNDAAASLENSASSDEEDI. A compositionally biased stretch (low complexity) spans 334–345; the sequence is SDSWNNNDAAAS. At Ser-385 the chain carries Phosphoserine. The helical transmembrane segment at 492–514 threads the bilayer; it reads TLSAILLAFIITWTPYNIMVLVN. The Extracellular segment spans residues 515-526; sequence TFCDSCIPKTFW. Cysteines 517 and 520 form a disulfide. The chain crosses the membrane as a helical span at residues 527 to 546; that stretch reads NLGYWLCYINSTVNPVCYAL. The Cytoplasmic segment spans residues 547–590; it reads CNKTFRTTFKMLLLCQCDKKKRRKQQYQQRQSVIFHKRAPEQAL.

It belongs to the G-protein coupled receptor 1 family. Muscarinic acetylcholine receptor subfamily. CHRM3 sub-subfamily. As to quaternary structure, homodimer; the dimers can form tetramers. Interacts with NALCN. Interacts with TMEM147.

The protein localises to the cell membrane. The protein resides in the postsynaptic cell membrane. It localises to the basolateral cell membrane. Its subcellular location is the endoplasmic reticulum membrane. Functionally, the muscarinic acetylcholine receptor mediates various cellular responses, including inhibition of adenylate cyclase, breakdown of phosphoinositides and modulation of potassium channels through the action of G proteins. Primary transducing effect is Pi turnover. In Pongo pygmaeus (Bornean orangutan), this protein is Muscarinic acetylcholine receptor M3 (CHRM3).